A 282-amino-acid polypeptide reads, in one-letter code: Shikimate dehydrogenase (NADP(+)) (282 aa).

Residues Ser-15–Ser-17 and Thr-62 contribute to the shikimate site. The active-site Proton acceptor is the Lys-66. Residues Asn-87 and Asp-103 each contribute to the shikimate site. Residues Gly-128–Ala-132, Asn-152–Lys-157, and Met-216 contribute to the NADP(+) site. Tyr-218 provides a ligand contact to shikimate. Gly-240 contributes to the NADP(+) binding site.

It belongs to the shikimate dehydrogenase family. In terms of assembly, homodimer.

It carries out the reaction shikimate + NADP(+) = 3-dehydroshikimate + NADPH + H(+). The protein operates within metabolic intermediate biosynthesis; chorismate biosynthesis; chorismate from D-erythrose 4-phosphate and phosphoenolpyruvate: step 4/7. Functionally, involved in the biosynthesis of the chorismate, which leads to the biosynthesis of aromatic amino acids. Catalyzes the reversible NADPH linked reduction of 3-dehydroshikimate (DHSA) to yield shikimate (SA). This chain is Shikimate dehydrogenase (NADP(+)), found in Nitrosococcus oceani (strain ATCC 19707 / BCRC 17464 / JCM 30415 / NCIMB 11848 / C-107).